The chain runs to 138 residues: ATP synthase epsilon chain (138 aa).

Belongs to the ATPase epsilon chain family. In terms of assembly, F-type ATPases have 2 components, CF(1) - the catalytic core - and CF(0) - the membrane proton channel. CF(1) has five subunits: alpha(3), beta(3), gamma(1), delta(1), epsilon(1). CF(0) has three main subunits: a, b and c.

It is found in the cell membrane. Functionally, produces ATP from ADP in the presence of a proton gradient across the membrane. The chain is ATP synthase epsilon chain (atpC) from Buchnera aphidicola subsp. Schizaphis graminum (strain Sg).